Here is a 764-residue protein sequence, read N- to C-terminus: 5-methyltetrahydropteroyltriglutamate--homocysteine methyltransferase (764 aa).

Residues 17-20 and Lys117 each bind 5-methyltetrahydropteroyltri-L-glutamate; that span reads RELK. L-homocysteine is bound by residues 436-438 and Glu489; that span reads IGS. Residues 436-438 and Glu489 contribute to the L-methionine site; that span reads IGS. Residues 520-521 and Trp566 each bind 5-methyltetrahydropteroyltri-L-glutamate; that span reads RC. Asp604 contributes to the L-homocysteine binding site. An L-methionine-binding site is contributed by Asp604. Glu610 is a binding site for 5-methyltetrahydropteroyltri-L-glutamate. Positions 646, 648, and 670 each coordinate Zn(2+). His699 acts as the Proton donor in catalysis. Cys731 is a Zn(2+) binding site.

This sequence belongs to the vitamin-B12 independent methionine synthase family. Requires Zn(2+) as cofactor.

The catalysed reaction is 5-methyltetrahydropteroyltri-L-glutamate + L-homocysteine = tetrahydropteroyltri-L-glutamate + L-methionine. It functions in the pathway amino-acid biosynthesis; L-methionine biosynthesis via de novo pathway; L-methionine from L-homocysteine (MetE route): step 1/1. In terms of biological role, catalyzes the transfer of a methyl group from 5-methyltetrahydrofolate to homocysteine resulting in methionine formation. This chain is 5-methyltetrahydropteroyltriglutamate--homocysteine methyltransferase, found in Baumannia cicadellinicola subsp. Homalodisca coagulata.